The chain runs to 360 residues: Phospho-N-acetylmuramoyl-pentapeptide-transferase (360 aa).

Transmembrane regions (helical) follow at residues 21-41 (YITF…LWIG), 73-93 (TMGG…WADL), 98-118 (VWFV…DDYW), 132-152 (WKYF…YAIG), 168-188 (VMPQ…VGTS), 199-219 (GLAI…AWAT), 236-256 (SGEL…FLWF), 263-283 (VFMG…IAVL), 288-308 (LLLV…ILQV), and 338-358 (VIVR…VTLK).

The protein belongs to the glycosyltransferase 4 family. MraY subfamily. Mg(2+) serves as cofactor.

It is found in the cell inner membrane. It carries out the reaction UDP-N-acetyl-alpha-D-muramoyl-L-alanyl-gamma-D-glutamyl-meso-2,6-diaminopimeloyl-D-alanyl-D-alanine + di-trans,octa-cis-undecaprenyl phosphate = di-trans,octa-cis-undecaprenyl diphospho-N-acetyl-alpha-D-muramoyl-L-alanyl-D-glutamyl-meso-2,6-diaminopimeloyl-D-alanyl-D-alanine + UMP. Its pathway is cell wall biogenesis; peptidoglycan biosynthesis. Its function is as follows. Catalyzes the initial step of the lipid cycle reactions in the biosynthesis of the cell wall peptidoglycan: transfers peptidoglycan precursor phospho-MurNAc-pentapeptide from UDP-MurNAc-pentapeptide onto the lipid carrier undecaprenyl phosphate, yielding undecaprenyl-pyrophosphoryl-MurNAc-pentapeptide, known as lipid I. In Glaesserella parasuis serovar 5 (strain SH0165) (Haemophilus parasuis), this protein is Phospho-N-acetylmuramoyl-pentapeptide-transferase.